The sequence spans 374 residues: Ras-related GTP-binding protein B (374 aa).

An N-acetylmethionine modification is found at Met-1. A compositionally biased stretch (basic and acidic residues) spans Met-1 to Val-15. The interval Met-1 to Leu-30 is disordered. 2 residues coordinate GTP: Ser-49 and Gly-50. Positions 50, 51, 52, 53, 54, 55, 69, and 75 each coordinate GDP. GTP contacts are provided by Gly-52, Lys-53, Thr-54, Ser-55, Thr-69, Thr-75, Gly-126, and His-188. Residues His-188 and Asp-191 each coordinate GDP. Residue Lys-203 forms a Glycyl lysine isopeptide (Lys-Gly) (interchain with G-Cter in ubiquitin) linkage. Residues Leu-209 and Ile-225 each contribute to the GDP site. Position 225 (Ile-225) interacts with GTP. Glycyl lysine isopeptide (Lys-Gly) (interchain with G-Cter in ubiquitin) cross-links involve residues Lys-281, Lys-291, and Lys-305.

Belongs to the GTR/RAG GTP-binding protein family. In terms of assembly, interacts with RRAGC and RRAGD; heterodimerization stabilizes RRAG proteins. The GTP-bound form of RRAGB (in complex with the GDP-bound form of RRAGC or RRAGD) interacts with RPTOR, thereby promoting recruitment of mTORC1 to the lysosomes. Component of the lysosomal folliculin complex (LFC), composed of FLCN, FNIP1 (or FNIP2), RagA/RRAGA or RagB/RRAGB GDP-bound, RagC/RRAGC or RagD/RRAGD GTP-bound, and Ragulator. Interacts with SH3BP4; the interaction with this negative regulator is most probably direct, preferentially occurs with the inactive GDP-bound form of RRAGB, is negatively regulated by amino acids and prevents interaction with RPTOR. Interacts with the GATOR1 complex; inactivates RRAGB. The Rag heterodimer interacts with SLC38A9; the probable amino acid sensor. Interacts with SESN1, SESN2 and SESN3.

Its subcellular location is the cytoplasm. It localises to the lysosome membrane. The catalysed reaction is GTP + H2O = GDP + phosphate + H(+). With respect to regulation, the activation of GTP-binding proteins is generally mediated by a guanine exchange factor (GEF), while inactivation through hydrolysis of bound GTP is catalyzed by a GTPase activating protein (GAP). The Ragulator complex functions as a GEF and promotes the active GTP-bound form. The GATOR1 complex functions as a GAP and stimulates RRAGB GTPase activity to turn it into its inactive GDP-bound form, preventing mTORC1 recruitment and activation. Functionally, guanine nucleotide-binding protein that plays a crucial role in the cellular response to amino acid availability through regulation of the mTORC1 signaling cascade. Forms heterodimeric Rag complexes with RagC/RRAGC or RagD/RRAGD and cycles between an inactive GDP-bound and an active GTP-bound form: RagB/RRAGB is in its active form when GTP-bound RagB/RRAGB forms a complex with GDP-bound RagC/RRAGC (or RagD/RRAGD) and in an inactive form when GDP-bound RagB/RRAGB heterodimerizes with GTP-bound RagC/RRAGC (or RagD/RRAGD). In its GTP-bound active form, promotes the recruitment of mTORC1 to the lysosomes and its subsequent activation by the GTPase RHEB. Involved in the RCC1/Ran-GTPase pathway. The polypeptide is Ras-related GTP-binding protein B (Mus musculus (Mouse)).